Reading from the N-terminus, the 708-residue chain is tRNA 5-methylaminomethyl-2-thiouridine biosynthesis bifunctional protein MnmC (708 aa).

The tRNA (mnm(5)s(2)U34)-methyltransferase stretch occupies residues Met1 to Ala278. The interval Ile301 to Leu708 is FAD-dependent cmnm(5)s(2)U34 oxidoreductase.

This sequence in the N-terminal section; belongs to the methyltransferase superfamily. tRNA (mnm(5)s(2)U34)-methyltransferase family. In the C-terminal section; belongs to the DAO family. FAD is required as a cofactor.

The protein resides in the cytoplasm. It catalyses the reaction 5-aminomethyl-2-thiouridine(34) in tRNA + S-adenosyl-L-methionine = 5-methylaminomethyl-2-thiouridine(34) in tRNA + S-adenosyl-L-homocysteine + H(+). Catalyzes the last two steps in the biosynthesis of 5-methylaminomethyl-2-thiouridine (mnm(5)s(2)U) at the wobble position (U34) in tRNA. Catalyzes the FAD-dependent demodification of cmnm(5)s(2)U34 to nm(5)s(2)U34, followed by the transfer of a methyl group from S-adenosyl-L-methionine to nm(5)s(2)U34, to form mnm(5)s(2)U34. The protein is tRNA 5-methylaminomethyl-2-thiouridine biosynthesis bifunctional protein MnmC of Shewanella baltica (strain OS195).